The chain runs to 247 residues: E3 ubiquitin-protein ligase RNF182 (247 aa).

Residues 20–68 (CKICYNRYNLKQRKPKVLECCHRVCAKCLYKIIDFGDSPQGVIVCPFCR) form an RING-type zinc finger. A run of 2 helical transmembrane segments spans residues 184 to 204 (VLVW…IYLL) and 211 to 231 (LGVV…VYGF).

Interacts with ATP6V0C.

It localises to the membrane. It is found in the cytoplasm. It carries out the reaction S-ubiquitinyl-[E2 ubiquitin-conjugating enzyme]-L-cysteine + [acceptor protein]-L-lysine = [E2 ubiquitin-conjugating enzyme]-L-cysteine + N(6)-ubiquitinyl-[acceptor protein]-L-lysine.. It participates in protein modification; protein ubiquitination. Functionally, E3 ubiquitin-protein ligase that mediates the ubiquitination of ATP6V0C and targets it to degradation via the ubiquitin-proteasome pathway. Also plays a role in the inhibition of TLR-triggered innate immune response by mediating 'Lys'-48-linked ubiquitination and subsequent degradation of NF-kappa-B component RELA. This Rattus norvegicus (Rat) protein is E3 ubiquitin-protein ligase RNF182 (Rnf182).